Consider the following 31-residue polypeptide: Cytochrome b6-f complex subunit 6 (31 aa).

The helical transmembrane segment at 4 to 26 threads the bilayer; sequence ITSYFGFLLAASTITSALLIGLS.

Belongs to the PetL family. The 4 large subunits of the cytochrome b6-f complex are cytochrome b6, subunit IV (17 kDa polypeptide, PetD), cytochrome f and the Rieske protein, while the 4 small subunits are PetG, PetL, PetM and PetN. The complex functions as a dimer.

The protein resides in the plastid. It is found in the chloroplast thylakoid membrane. Its function is as follows. Component of the cytochrome b6-f complex, which mediates electron transfer between photosystem II (PSII) and photosystem I (PSI), cyclic electron flow around PSI, and state transitions. PetL is important for photoautotrophic growth as well as for electron transfer efficiency and stability of the cytochrome b6-f complex. The sequence is that of Cytochrome b6-f complex subunit 6 from Chloranthus spicatus (Chulantree).